Consider the following 390-residue polypeptide: 23S rRNA (uracil(747)-C(5))-methyltransferase RlmC (390 aa).

[4Fe-4S] cluster is bound by residues Cys-12, Cys-20, Cys-23, and Cys-100. Residues Gln-225, Phe-254, Glu-275, and Asn-322 each coordinate S-adenosyl-L-methionine. Cys-349 serves as the catalytic Nucleophile.

Belongs to the class I-like SAM-binding methyltransferase superfamily. RNA M5U methyltransferase family. RlmC subfamily.

The enzyme catalyses uridine(747) in 23S rRNA + S-adenosyl-L-methionine = 5-methyluridine(747) in 23S rRNA + S-adenosyl-L-homocysteine + H(+). In terms of biological role, catalyzes the formation of 5-methyl-uridine at position 747 (m5U747) in 23S rRNA. The chain is 23S rRNA (uracil(747)-C(5))-methyltransferase RlmC from Shewanella baltica (strain OS155 / ATCC BAA-1091).